The sequence spans 313 residues: MTEFKHETVLLKEATAALAVKPAGIYVDATLGRGGHTRQILNQLTTGRLIAFDQDEAAIATVTADFGTLPKQLTLVHRNFRDLTDALTTLGITEVDGILYDLGVSSPQFDDSKRGFSYRFDAPLDMRMDQRQTLDAKTIVNEWPYADLVRIFSRYGEEHFSKQIARRIEQARTVQPITTTFQLVELIKAGIPAKARRTGGHPAKKVFQAIRIAVNDELSALESSLEQALKLINVGGRISVITFQSLEDRLVKTMFKEVSSVQDVPRGLPVIPASAQPNYRLVNRKPILPSEEELAVNHRAHSAKLRVIEKIHD.

S-adenosyl-L-methionine contacts are provided by residues 34 to 36 (GGH), Asp53, Phe80, Asp101, and Gln108.

It belongs to the methyltransferase superfamily. RsmH family.

It is found in the cytoplasm. It carries out the reaction cytidine(1402) in 16S rRNA + S-adenosyl-L-methionine = N(4)-methylcytidine(1402) in 16S rRNA + S-adenosyl-L-homocysteine + H(+). Specifically methylates the N4 position of cytidine in position 1402 (C1402) of 16S rRNA. The polypeptide is Ribosomal RNA small subunit methyltransferase H (Lacticaseibacillus casei (strain BL23) (Lactobacillus casei)).